Here is a 327-residue protein sequence, read N- to C-terminus: GTPase Obg (327 aa).

Residues 1 to 159 (MQFIDQANII…WEVQLELKLL (159 aa)) form the Obg domain. The OBG-type G domain maps to 160–327 (AEVGIIGLPN…SLLSEVWNRI (168 aa)). Residues 166–173 (GLPNAGKS), 191–195 (FTTLI), 213–216 (DIPG), 280–283 (NKKE), and 309–311 (SSA) contribute to the ATP site. Mg(2+) contacts are provided by S173 and T193.

It belongs to the TRAFAC class OBG-HflX-like GTPase superfamily. OBG GTPase family. In terms of assembly, monomer. It depends on Mg(2+) as a cofactor.

The protein resides in the cytoplasm. An essential GTPase which binds GTP, GDP and possibly (p)ppGpp with moderate affinity, with high nucleotide exchange rates and a fairly low GTP hydrolysis rate. Plays a role in control of the cell cycle, stress response, ribosome biogenesis and in those bacteria that undergo differentiation, in morphogenesis control. The polypeptide is GTPase Obg (Prochlorococcus marinus (strain MIT 9515)).